A 363-amino-acid polypeptide reads, in one-letter code: Isopentenyl-diphosphate delta-isomerase (363 aa).

7–8 serves as a coordination point for substrate; sequence RK. Residues 71 to 73, serine 101, and asparagine 130 contribute to the FMN site; that span reads AMT. Residue glutamine 160 coordinates substrate. Glutamate 161 is a Mg(2+) binding site. FMN contacts are provided by residues lysine 192, serine 217, threonine 222, 270-272, and 291-292; these read GIR and AG.

This sequence belongs to the IPP isomerase type 2 family. Homooctamer. Dimer of tetramers. It depends on FMN as a cofactor. The cofactor is NADPH. Mg(2+) serves as cofactor.

Its subcellular location is the cytoplasm. It catalyses the reaction isopentenyl diphosphate = dimethylallyl diphosphate. Involved in the biosynthesis of isoprenoids. Catalyzes the 1,3-allylic rearrangement of the homoallylic substrate isopentenyl (IPP) to its allylic isomer, dimethylallyl diphosphate (DMAPP). The sequence is that of Isopentenyl-diphosphate delta-isomerase from Symbiobacterium thermophilum (strain DSM 24528 / JCM 14929 / IAM 14863 / T).